A 229-amino-acid polypeptide reads, in one-letter code: Large ribosomal subunit protein uL1 (229 aa).

The protein belongs to the universal ribosomal protein uL1 family. As to quaternary structure, part of the 50S ribosomal subunit.

Binds directly to 23S rRNA. The L1 stalk is quite mobile in the ribosome, and is involved in E site tRNA release. Its function is as follows. Protein L1 is also a translational repressor protein, it controls the translation of the L11 operon by binding to its mRNA. This Clostridium botulinum (strain 657 / Type Ba4) protein is Large ribosomal subunit protein uL1.